The following is a 193-amino-acid chain: Selenate reductase assembly chaperone protein (193 aa).

It belongs to the type II DMSO reductase enzyme chaperone family.

It is found in the cytoplasm. Its function is as follows. May function as a system-specific chaperone protein essential for the assembly of an active selenate reductase SerABC. The sequence is that of Selenate reductase assembly chaperone protein from Thauera selenatis.